Here is a 370-residue protein sequence, read N- to C-terminus: MESNKDEAERCISIALKAIQSNQPDRALRFLEKAQRLYPTPRVHALIESLNQKPQPAGDQPQPTEATHTTHRKAAGANTASANGEAGGESTKGYTAEQVAAVKRVKQCKDYYEILGVSRGASDEDLKKAYRKLALKFHPDKNHAPGATEAFKAIGTAYAVLSNPEKRKQYDQFGDDKGQAARHGHGHGDFHRGFEADISPEDLFNMFFGGGFPSSNVHVYSNGRMRYTYHQRQDRRENQGDGGLGVFVQLMPILILILVSALSQLMVSSPPYSLSLRPSVGHVHKRVTDHLNVVYYVADTFSQEYTGSSLKMVERNVEDDYIANLRNNCWKEKQQKEGLLYRARYFGDADMYNKAQKDGAPQAVTDCQRL.

Methionine 1 is subject to N-acetylmethionine. The segment at asparagine 51–lysine 92 is disordered. Residues aspartate 110–glycine 174 enclose the J domain. Residue histidine 185 is modified to Pros-methylhistidine. A helical membrane pass occupies residues glycine 242–leucine 262.

The protein belongs to the DnaJ family. DNAJB12/DNAJB14 subfamily. Homodimer and homotetramer. Interacts (via J domain) with HSPA8/Hsc70. Forms a multiprotein complex, at least composed of DNAJB12, DNAJB14, HSPA8/Hsc70 and SGTA; interaction with DNAJB14 and HSPA8/Hsc70 is direct. In terms of processing, methylated at His-185 by METTL9.

The protein resides in the endoplasmic reticulum membrane. It localises to the nucleus membrane. Functionally, acts as a co-chaperone with HSPA8/Hsc70; required to promote protein folding and trafficking, prevent aggregation of client proteins, and promote unfolded proteins to endoplasmic reticulum-associated degradation (ERAD) pathway. Acts by determining HSPA8/Hsc70's ATPase and polypeptide-binding activities. Can also act independently of HSPA8/Hsc70: together with DNAJB14, acts as a chaperone that promotes maturation of potassium channels KCND2 and KCNH2 by stabilizing nascent channel subunits and assembling them into tetramers. While stabilization of nascent channel proteins is dependent on HSPA8/Hsc70, the process of oligomerization of channel subunits is independent of HSPA8/Hsc70. When overexpressed, forms membranous structures together with DNAJB14 and HSPA8/Hsc70 within the nucleus; the role of these structures, named DJANGOs, is still unclear. The sequence is that of DnaJ homolog subfamily B member 12 (DNAJB12) from Bos taurus (Bovine).